A 942-amino-acid polypeptide reads, in one-letter code: DNA polymerase I (942 aa).

Residues 177–269 (EPDQLADLRG…LEAARIGVYD (93 aa)) enclose the 5'-3' exonuclease domain. The region spanning 340–522 (TIVRDATALA…LTERLQRQLE (183 aa)) is the 3'-5' exonuclease domain.

It belongs to the DNA polymerase type-A family. Single-chain monomer with multiple functions.

It catalyses the reaction DNA(n) + a 2'-deoxyribonucleoside 5'-triphosphate = DNA(n+1) + diphosphate. In terms of biological role, in addition to polymerase activity, this DNA polymerase exhibits 3'-5' and 5'-3' exonuclease activity. This Chloroflexus aurantiacus (strain ATCC 29366 / DSM 635 / J-10-fl) protein is DNA polymerase I (polA).